We begin with the raw amino-acid sequence, 220 residues long: Ribosomal RNA small subunit methyltransferase G (220 aa).

S-adenosyl-L-methionine is bound by residues Gly-82, Leu-87, 105–107 (DST), 133–134 (VE), and Arg-147.

Belongs to the methyltransferase superfamily. RNA methyltransferase RsmG family.

It localises to the cytoplasm. Its function is as follows. Specifically methylates the N7 position of a guanine in 16S rRNA. This chain is Ribosomal RNA small subunit methyltransferase G, found in Chlorobium limicola (strain DSM 245 / NBRC 103803 / 6330).